The following is a 355-amino-acid chain: MNTTPVHALTDIDGGIAVDPAPRLAGPPVFGGPGNDAFDLAPVRSTGREMLRFDFPGVSIGAAHYEEGPTGATVIHIPAGARTAVDARGGAVGLSGGYDFNHAICLAGGASYGLEAGAGVSGALLERLEYRTGFAEAQLVSSAVIYDFSARSTAVYPDKALGRAALEFAVPGEFPQGRAGAGMSASAGKVDWDRTEITGQGAAFRRLGDVRILAVVVPNPVGVIMDRAGTVVRGNYDAQTGVRRHPVFDYQEAFAEQVPPVTEAGNTTISAIVTNVRMSPVELNQFAKQVHSSMHRGIQPFHTDMDGDTLFAVTTDEIDLPTTPGSSRGRLSVNATALGAIASEVMWDAVLEAGK.

The active-site Nucleophile is T267.

This sequence belongs to the peptidase S58 family. In terms of assembly, heterotetramer composed of 4 alpha/beta heterodimers. Expressed as an inactive precursor that is cleaved autocatalytically at Asn266/Thr267 to generate an active enzyme composed of an alpha subunit and a beta subunit.

It carries out the reaction [N-(6-aminohexanoyl)]n + H2O = [N-(6-aminohexanoyl)]n-x + [N-(6-aminohexanoyl)]x.. Its pathway is xenobiotic degradation; nylon-6 oligomer degradation. In terms of biological role, involved in the degradation of nylon-6 oligomers. Degrades cyclic and linear oligomers of 6-aminohexanoate (Ahx) with a degree of polymerization greater than three by an endo-type mode. Cannot use Ahx cyclic dimer or the Ahx linear dimer. This chain is 6-aminohexanoate-oligomer endohydrolase, found in Agromyces sp. (strain KY5R).